The following is a 125-amino-acid chain: Small ribosomal subunit protein eS8 (125 aa).

This sequence belongs to the eukaryotic ribosomal protein eS8 family. Part of the 30S ribosomal subunit.

This Methanosarcina mazei (strain ATCC BAA-159 / DSM 3647 / Goe1 / Go1 / JCM 11833 / OCM 88) (Methanosarcina frisia) protein is Small ribosomal subunit protein eS8.